We begin with the raw amino-acid sequence, 499 residues long: MQMIDIRPPDPRHFISGSTGDWEVVIGMEVHAQIVSDSKLFSGASTKFGAEPNNHVSLIDAAMPGMLPVVNQECIRQAIRTGLGLKAQINLKSVFDRKNYFYPDLPQGYQISQFHYPIVGEGKVTISIGPDSNGQFEDVEIGIERLHLEQDAGKSIHDQHPTMSFVDLNRSGVALMEIVSKPDMRSSEEAKAYITKLRMILRYLGTCDGNMDEGSIRADVNVSVRRPGEPLGTRCEIKNVNSIRFIGQAIEYEARRQIAVLEDGGVIDPETRLFDAAKCETRSIRLKEEAHDYRYFPDPDLLPLEFDQAFVDALASELPELPDDIKARFINDMGLTVYDASILITEKEIADYFQKVARGRDGKMVANWVINDLLGALNKNNCKIEDTPVKPDQLGAIIDLIEEGIISGKIAKDLFEIIWHEGGDLRQIVEERGMKQVTDTGAIQSAVDEIMANNPDKVSQAKEKPALVGWFVGQVMKETGGKANPQTVNKLVKMKLEID.

Belongs to the GatB/GatE family. GatB subfamily. In terms of assembly, heterotrimer of A, B and C subunits.

It carries out the reaction L-glutamyl-tRNA(Gln) + L-glutamine + ATP + H2O = L-glutaminyl-tRNA(Gln) + L-glutamate + ADP + phosphate + H(+). The enzyme catalyses L-aspartyl-tRNA(Asn) + L-glutamine + ATP + H2O = L-asparaginyl-tRNA(Asn) + L-glutamate + ADP + phosphate + 2 H(+). Allows the formation of correctly charged Asn-tRNA(Asn) or Gln-tRNA(Gln) through the transamidation of misacylated Asp-tRNA(Asn) or Glu-tRNA(Gln) in organisms which lack either or both of asparaginyl-tRNA or glutaminyl-tRNA synthetases. The reaction takes place in the presence of glutamine and ATP through an activated phospho-Asp-tRNA(Asn) or phospho-Glu-tRNA(Gln). In Bartonella bacilliformis (strain ATCC 35685 / KC583 / Herrer 020/F12,63), this protein is Aspartyl/glutamyl-tRNA(Asn/Gln) amidotransferase subunit B.